Reading from the N-terminus, the 98-residue chain is Co-chaperonin GroES (98 aa).

This sequence belongs to the GroES chaperonin family. Heptamer of 7 subunits arranged in a ring. Interacts with the chaperonin GroEL.

It is found in the cytoplasm. In terms of biological role, together with the chaperonin GroEL, plays an essential role in assisting protein folding. The GroEL-GroES system forms a nano-cage that allows encapsulation of the non-native substrate proteins and provides a physical environment optimized to promote and accelerate protein folding. GroES binds to the apical surface of the GroEL ring, thereby capping the opening of the GroEL channel. The sequence is that of Co-chaperonin GroES from Rhizobium leguminosarum bv. trifolii (strain WSM2304).